The following is a 429-amino-acid chain: Histidine--tRNA ligase (429 aa).

It belongs to the class-II aminoacyl-tRNA synthetase family. As to quaternary structure, homodimer.

The protein localises to the cytoplasm. The enzyme catalyses tRNA(His) + L-histidine + ATP = L-histidyl-tRNA(His) + AMP + diphosphate + H(+). In Streptococcus pneumoniae (strain JJA), this protein is Histidine--tRNA ligase.